The following is a 24-amino-acid chain: MLKLHGFSVSNYYNMVKLALLEKG.

This sequence belongs to the GST superfamily. As to quaternary structure, monomer and homodimer.

The protein localises to the cytoplasm. The catalysed reaction is RX + glutathione = an S-substituted glutathione + a halide anion + H(+). Conjugation of reduced glutathione to a wide number of exogenous and endogenous hydrophobic electrophiles. The protein is Glutathione S-transferase of Pseudomonas sp. (strain CF600).